The sequence spans 396 residues: DNA-directed RNA polymerase subunit 6 (396 aa).

2 disordered regions span residues 1-137 and 290-396; these read MSSK…DIED and NQQK…DYSE. 3 stretches are compositionally biased toward acidic residues: residues 21-53, 76-88, and 97-137; these read EYYD…DDEN, IDPD…DTDG, and EMGE…DIED. Residues 290-312 are compositionally biased toward polar residues; the sequence is NQQKNSTTDTETLSTQENASTRV. Low complexity-rich tracts occupy residues 313–338 and 346–366; these read SGSN…SKSN and NSRT…SRTG. Residues 367 to 380 show a composition bias toward basic residues; it reads SKSKKSSNTKSKSK. The span at 385–396 shows a compositional bias: acidic residues; the sequence is NSDDSDYSDYSE.

It belongs to the archaeal Rpo6/eukaryotic RPB6 RNA polymerase subunit family.

The enzyme catalyses RNA(n) + a ribonucleoside 5'-triphosphate = RNA(n+1) + diphosphate. Its function is as follows. DNA-dependent RNA polymerase catalyzes the transcription of DNA into RNA using the four ribonucleoside triphosphates as substrates. The sequence is that of DNA-directed RNA polymerase subunit 6 from Acanthamoeba polyphaga (Amoeba).